The chain runs to 273 residues: Dermonecrotic toxin LdSicTox-alphaIB3avi (273 aa).

Residue His-5 is part of the active site. The Mg(2+) site is built by Glu-25 and Asp-27. His-41 acts as the Nucleophile in catalysis. 2 disulfides stabilise this stretch: Cys-45-Cys-51 and Cys-47-Cys-190. Asp-85 is a binding site for Mg(2+).

It belongs to the arthropod phospholipase D family. Class II subfamily. Requires Mg(2+) as cofactor. Expressed by the venom gland.

It is found in the secreted. It carries out the reaction an N-(acyl)-sphingosylphosphocholine = an N-(acyl)-sphingosyl-1,3-cyclic phosphate + choline. It catalyses the reaction an N-(acyl)-sphingosylphosphoethanolamine = an N-(acyl)-sphingosyl-1,3-cyclic phosphate + ethanolamine. The catalysed reaction is a 1-acyl-sn-glycero-3-phosphocholine = a 1-acyl-sn-glycero-2,3-cyclic phosphate + choline. The enzyme catalyses a 1-acyl-sn-glycero-3-phosphoethanolamine = a 1-acyl-sn-glycero-2,3-cyclic phosphate + ethanolamine. In terms of biological role, dermonecrotic toxins cleave the phosphodiester linkage between the phosphate and headgroup of certain phospholipids (sphingolipid and lysolipid substrates), forming an alcohol (often choline) and a cyclic phosphate. This toxin acts on sphingomyelin (SM). It may also act on ceramide phosphoethanolamine (CPE), lysophosphatidylcholine (LPC) and lysophosphatidylethanolamine (LPE), but not on lysophosphatidylserine (LPS), and lysophosphatidylglycerol (LPG). It acts by transphosphatidylation, releasing exclusively cyclic phosphate products as second products. Induces dermonecrosis, hemolysis, increased vascular permeability, edema, inflammatory response, and platelet aggregation. The polypeptide is Dermonecrotic toxin LdSicTox-alphaIB3avi (Loxosceles deserta (Desert recluse spider)).